A 244-amino-acid polypeptide reads, in one-letter code: 7-cyano-7-deazaguanine synthase (244 aa).

Phe14–Val24 is a binding site for ATP. Zn(2+) is bound by residues Cys202, Cys217, Cys220, and Cys223.

This sequence belongs to the QueC family. It depends on Zn(2+) as a cofactor.

The catalysed reaction is 7-carboxy-7-deazaguanine + NH4(+) + ATP = 7-cyano-7-deazaguanine + ADP + phosphate + H2O + H(+). It participates in purine metabolism; 7-cyano-7-deazaguanine biosynthesis. Functionally, catalyzes the ATP-dependent conversion of 7-carboxy-7-deazaguanine (CDG) to 7-cyano-7-deazaguanine (preQ(0)). In Burkholderia lata (strain ATCC 17760 / DSM 23089 / LMG 22485 / NCIMB 9086 / R18194 / 383), this protein is 7-cyano-7-deazaguanine synthase.